Reading from the N-terminus, the 430-residue chain is MALLHSGRVLSGVASAFHPGLAAAASARASSWWAHVEMGPPDPILGVTEAFKRDTNSKKMNLGVGAYRDDNGKPYVLPSVRKAEAQIAAKNLDKEYLPIGGLAEFCKASAELALGENNEVLKSGRYVTVQTISGTGALRIGANFLQRFFKFSRDVFLPKPSWGNHTPIFRDAGMQLHSYRYYDPKTCGFDFTGALEDISKIPAQSVILLHACAHNPTGVDPRPEQWKEMATLVKKNNLFAFFDMAYQGFASGDGNKDAWAVRHFIEQGINVCLCQSYAKNMGLYGERVGAFTVVCKDAEEAKRVESQLKILIRPMYSNPPVNGARIASTILTSPDLRQQWLQEVKGMADRIISMRTQLVSNLKKEGSSHNWQHIVDQIGMFCFTGIKPEQVERLTKEFSIYMTKDGRISVAGVTSGNVGYLAHAIHQVTK.

The transit peptide at 1 to 29 (MALLHSGRVLSGVASAFHPGLAAAASARA) directs the protein to the mitochondrion. Thr48 carries the phosphothreonine modification. Lys59 is modified (N6-acetyllysine). Gly65 is a substrate binding site. At Lys73 the chain carries N6-acetyllysine; alternate. Position 73 is an N6-succinyllysine; alternate (Lys73). At Lys82 the chain carries N6-acetyllysine. Lys90 is subject to N6-acetyllysine; alternate. N6-succinyllysine; alternate is present on Lys90. The residue at position 96 (Tyr96) is a 3'-nitrotyrosine; alternate. Tyr96 is modified (phosphotyrosine; alternate). Lys107, Lys122, and Lys159 each carry N6-acetyllysine; alternate. 3 positions are modified to N6-succinyllysine; alternate: Lys107, Lys122, and Lys159. A substrate-binding site is contributed by Trp162. Position 185 is an N6-acetyllysine; alternate (Lys185). Lys185 carries the post-translational modification N6-succinyllysine; alternate. Substrate is bound at residue Asn215. At Lys227 the chain carries N6-succinyllysine. An N6-acetyllysine modification is found at Lys234. 2 positions are modified to N6-acetyllysine; alternate: Lys279 and Lys296. An N6-(pyridoxal phosphate)lysine; alternate modification is found at Lys279. Lys296 is modified (N6-succinyllysine; alternate). Position 302 is an N6-acetyllysine (Lys302). Lys309 is modified (N6-acetyllysine; alternate). Lys309 carries the post-translational modification N6-succinyllysine; alternate. Arg313 bears the Asymmetric dimethylarginine mark. Residue Lys345 is modified to N6-acetyllysine. Lys363 carries the N6-acetyllysine; alternate modification. An N6-succinyllysine; alternate modification is found at Lys363. Residues Lys364 and Lys387 each carry the N6-acetyllysine modification. N6-acetyllysine; alternate occurs at positions 396 and 404. Lys396 and Lys404 each carry N6-succinyllysine; alternate. Arg407 is a binding site for substrate.

This sequence belongs to the class-I pyridoxal-phosphate-dependent aminotransferase family. In terms of assembly, homodimer. The cofactor is pyridoxal 5'-phosphate.

The protein resides in the mitochondrion matrix. It is found in the cell membrane. It catalyses the reaction L-aspartate + 2-oxoglutarate = oxaloacetate + L-glutamate. The catalysed reaction is L-kynurenine + 2-oxoglutarate = kynurenate + L-glutamate + H2O. Catalyzes the irreversible transamination of the L-tryptophan metabolite L-kynurenine to form kynurenic acid (KA). As a member of the malate-aspartate shuttle, it has a key role in the intracellular NAD(H) redox balance. Is important for metabolite exchange between mitochondria and cytosol, and for amino acid metabolism. Facilitates cellular uptake of long-chain free fatty acids. The protein is Aspartate aminotransferase, mitochondrial (GOT2) of Sus scrofa (Pig).